The chain runs to 185 residues: Ribosome-recycling factor (185 aa).

This sequence belongs to the RRF family.

The protein resides in the cytoplasm. Responsible for the release of ribosomes from messenger RNA at the termination of protein biosynthesis. May increase the efficiency of translation by recycling ribosomes from one round of translation to another. The chain is Ribosome-recycling factor from Ectopseudomonas mendocina (strain ymp) (Pseudomonas mendocina).